The chain runs to 85 residues: Antitoxin VapB43 (85 aa).

Residues 37-60 (GLNPPKPQAAGRYRVQPSGKGGLR) are disordered.

Antitoxin component of a type II toxin-antitoxin (TA) system. This Mycobacterium tuberculosis (strain CDC 1551 / Oshkosh) protein is Antitoxin VapB43 (vapB43).